The chain runs to 353 residues: Stearoyl-CoA desaturase 4 (353 aa).

Positions 1–42 (MTAHLPQEISSRCSTTNIMEPHSRRQQDGEEKMPLQAEDIRP) are disordered. The Cytoplasmic segment spans residues 1 to 66 (MTAHLPQEIS…EGPPPKLEYV (66 aa)). Polar residues predominate over residues 8-18 (EISSRCSTTNI). Basic and acidic residues predominate over residues 21-42 (PHSRRQQDGEEKMPLQAEDIRP). A helical membrane pass occupies residues 67-87 (WRNIIFMALLHVGALYGITLV). N69 is a binding site for substrate. Topologically, residues 88–91 (PSCK) are lumenal. Residues 92–112 (VYTWLLGVFYNVVAGLGITAG) form a helical membrane-spanning segment. The Cytoplasmic segment spans residues 113 to 211 (AHRLWSHRTY…EKLVMFQRRY (99 aa)). Fe cation contacts are provided by H114 and H119. Residues 114–119 (HRLWSH) carry the Histidine box-1 motif. Residues N142, R149, and D150 each contribute to the substrate site. The Fe cation site is built by H151, H154, and H155. Positions 151–155 (HRAHH) match the Histidine box-2 motif. Substrate is bound by residues R182 and K183. A helical transmembrane segment spans residues 212–231 (YKLAVTLMFIILPTLVPWYL). At 232–235 (WGET) the chain is on the lumenal side. The helical transmembrane segment at 236 to 257 (FQHSLCVSNFLRYAVLLNFTWL) threads the bilayer. Position 256 (W256) interacts with substrate. Over 258 to 353 (VNSAAHLYGY…RTGDGSHKSS (96 aa)) the chain is Cytoplasmic. Residues H263, H292, H295, and H296 each coordinate Fe cation. A Histidine box-3 motif is present at residues 292–296 (HNYHH).

It belongs to the fatty acid desaturase type 1 family. Fe(2+) serves as cofactor. As to expression, detected in heart, but not in brain, liver, skin or adipose tissue.

Its subcellular location is the endoplasmic reticulum membrane. The protein localises to the microsome membrane. The enzyme catalyses octadecanoyl-CoA + 2 Fe(II)-[cytochrome b5] + O2 + 2 H(+) = (9Z)-octadecenoyl-CoA + 2 Fe(III)-[cytochrome b5] + 2 H2O. It carries out the reaction hexadecanoyl-CoA + 2 Fe(II)-[cytochrome b5] + O2 + 2 H(+) = (9Z)-hexadecenoyl-CoA + 2 Fe(III)-[cytochrome b5] + 2 H2O. In terms of biological role, stearoyl-CoA desaturase that utilizes O(2) and electrons from reduced cytochrome b5 to introduce the first double bond into saturated fatty acyl-CoA substrates. Catalyzes the insertion of a cis double bond at the delta-9 position into fatty acyl-CoA substrates including palmitoyl-CoA and stearoyl-CoA. Required for the biosynthesis of membrane phospholipids, cholesterol esters and triglycerides. The protein is Stearoyl-CoA desaturase 4 of Mus musculus (Mouse).